A 297-amino-acid polypeptide reads, in one-letter code: N-acetylneuraminate lyase (297 aa).

Positions 47 and 48 each coordinate aceneuramate. Tyr137 acts as the Proton donor in catalysis. The Schiff-base intermediate with substrate role is filled by Lys165. Positions 167, 189, 191, 192, and 208 each coordinate aceneuramate.

The protein belongs to the DapA family. NanA subfamily. Homotetramer.

The protein resides in the cytoplasm. It catalyses the reaction aceneuramate = aldehydo-N-acetyl-D-mannosamine + pyruvate. The protein operates within amino-sugar metabolism; N-acetylneuraminate degradation; D-fructose 6-phosphate from N-acetylneuraminate: step 1/5. In terms of biological role, catalyzes the reversible aldol cleavage of N-acetylneuraminic acid (sialic acid; Neu5Ac) to form pyruvate and N-acetylmannosamine (ManNAc) via a Schiff base intermediate. The chain is N-acetylneuraminate lyase from Salmonella agona (strain SL483).